The primary structure comprises 284 residues: Four and a half LIM domains protein 5 (284 aa).

The C4-type zinc finger occupies 8–32; that stretch reads CQYCMASLLGKKYVLKDDNPYCVSC. LIM zinc-binding domains follow at residues 39–100, 101–160, 161–220, and 223–283; these read NYCE…ECSS, KCFH…KEFA, HYCS…LYAK, and AACT…VDTD.

Interacts with CREM (via the third LIM domain). Interacts (via second LIM domain) with SPAG8.

It localises to the nucleus. Functionally, may be involved in the regulation of spermatogenesis. Stimulates CREM transcriptional activity in a phosphorylation-independent manner. This Bos taurus (Bovine) protein is Four and a half LIM domains protein 5 (FHL5).